A 467-amino-acid polypeptide reads, in one-letter code: Matrix metalloproteinase-18 (467 aa).

The signal sequence occupies residues 1–17 (MNSLLLKLLLCVAITAA). The propeptide occupies 18–99 (FPADKQDEPP…PRCGVYDVGQ (82 aa)). The short motif at 90 to 97 (PRCGVYDV) is the Cysteine switch element. Zn(2+)-binding residues include C92 and H218. The active site involves E219. Zn(2+)-binding residues include H222 and H228. 4 Hemopexin repeats span residues 277-326 (PSRC…WPSL), 327-373 (PTNI…GFPK), 375-423 (VKRI…FPGI), and 424-467 (PDKI…WLGC). A disulfide bridge links C280 with C467.

This sequence belongs to the peptidase M10A family. Zn(2+) is required as a cofactor. The cofactor is Ca(2+). In terms of tissue distribution, expressed only transiently in whole animal, at time when tadpole feeding begins.

The protein resides in the secreted. Its subcellular location is the extracellular space. It is found in the extracellular matrix. With respect to regulation, up-regulated in the tail by thyroid hormone. Its function is as follows. Cleaves collagen type I. May play a role in larval tissue degeneration and adult organogenesis during amphibian metamorphosis. May be involved in tail resorption. The protein is Matrix metalloproteinase-18 (mmp18) of Xenopus laevis (African clawed frog).